The primary structure comprises 260 residues: Proteasome subunit alpha (260 aa).

The protein belongs to the peptidase T1A family. In terms of assembly, the 20S proteasome core is composed of 14 alpha and 14 beta subunits that assemble into four stacked heptameric rings, resulting in a barrel-shaped structure. The two inner rings, each composed of seven catalytic beta subunits, are sandwiched by two outer rings, each composed of seven alpha subunits. The catalytic chamber with the active sites is on the inside of the barrel. Has a gated structure, the ends of the cylinder being occluded by the N-termini of the alpha-subunits. Is capped at one or both ends by the proteasome regulatory ATPase, PAN.

It is found in the cytoplasm. The formation of the proteasomal ATPase PAN-20S proteasome complex, via the docking of the C-termini of PAN into the intersubunit pockets in the alpha-rings, triggers opening of the gate for substrate entry. Interconversion between the open-gate and close-gate conformations leads to a dynamic regulation of the 20S proteasome proteolysis activity. Functionally, component of the proteasome core, a large protease complex with broad specificity involved in protein degradation. This Thermococcus sp. (strain JCM 11816 / KS-1) protein is Proteasome subunit alpha.